We begin with the raw amino-acid sequence, 72 residues long: UPF0270 protein ESA_04379 (72 aa).

Belongs to the UPF0270 family.

The protein is UPF0270 protein ESA_04379 of Cronobacter sakazakii (strain ATCC BAA-894) (Enterobacter sakazakii).